The chain runs to 346 residues: Galanin receptor type 1 (346 aa).

Topologically, residues 1–33 are extracellular; that stretch reads MELAPVNLSEGNGSDPEPPAEPRPLFGIGVENF. N-linked (GlcNAc...) asparagine glycans are attached at residues N7 and N12. A helical transmembrane segment spans residues 34-54; that stretch reads ITLVVFGLIFAMGVLGNSLVI. Over 55–69 the chain is Cytoplasmic; it reads TVLARSKPGKPRSTT. Residues 70–90 traverse the membrane as a helical segment; that stretch reads NLFILNLSIADLAYLLFCIPF. Topologically, residues 91 to 108 are extracellular; it reads QATVYALPTWVLGAFICK. A disulfide bridge connects residues C107 and C185. The helical transmembrane segment at 109–130 threads the bilayer; that stretch reads FIHYFFTVSMLVSIFTLAAMSV. The Cytoplasmic segment spans residues 131–150; that stretch reads DRYVAIVHSRRSSSLRVSRN. Residues 151-171 traverse the membrane as a helical segment; the sequence is ALLGVGFIWALSIAMASPVAY. Over 172–196 the chain is Extracellular; sequence YQRLFHRDSNQTFCWEHWPNQLHKK. N181 is a glycosylation site (N-linked (GlcNAc...) asparagine). The chain crosses the membrane as a helical span at residues 197–217; sequence AYVVCTFVFGYLLPLLLICFC. At 218–246 the chain is on the cytoplasmic side; it reads YAKVLNHLHKKLKNMSKKSEASKKKTAQT. The helical transmembrane segment at 247 to 267 threads the bilayer; sequence VLVVVVVFGISWLPHHVIHLW. The Extracellular segment spans residues 268–269; the sequence is AE. Residues 270–290 traverse the membrane as a helical segment; that stretch reads FGAFPLTPASFFFRITAHCLA. Residues 291–346 are Cytoplasmic-facing; sequence YSNSSVNPIIYAFLSENFRKAYKQVFKCRVCNESPHGDAKEKNRIDTPPSTNCTHV. Residue C318 is the site of S-palmitoyl cysteine attachment. Positions 326 to 335 are enriched in basic and acidic residues; the sequence is HGDAKEKNRI. Positions 326-346 are disordered; that stretch reads HGDAKEKNRIDTPPSTNCTHV.

Belongs to the G-protein coupled receptor 1 family. Interacts with GRP39 AND HTR1A. Three cysteine residues are found in the C-terminus, at least one of which may be palmitoylated. As to expression, spinal cord, small intestine, Rin14B insulinoma cells and several brain regions, particularly ventral hippocampus, amygdala, supraoptic nucleus, hypothalamus, thalamus, lateral parabrachial nucleus and locus coeruleus.

The protein resides in the cell membrane. Receptor for the hormone galanin. The activity of this receptor is mediated by G proteins that inhibit adenylate cyclase activity. This Rattus norvegicus (Rat) protein is Galanin receptor type 1 (Galr1).